Reading from the N-terminus, the 375-residue chain is Fructose-1,6-bisphosphate aldolase/phosphatase (375 aa).

The active-site Proton acceptor; for FBP phosphatase activity is Asp15. Residues Asp15, His22, Asp56, and Asp57 each coordinate Mg(2+). His22 is a binding site for beta-D-fructose 1,6-bisphosphate. Position 22 (His22) interacts with dihydroxyacetone phosphate. Tyr94 provides a ligand contact to beta-D-fructose 1,6-bisphosphate. Gln98 contacts Mg(2+). 107 to 108 (GN) is a beta-D-fructose 1,6-bisphosphate binding site. Residue Asp135 coordinates Mg(2+). Residue Lys136 participates in beta-D-fructose 1,6-bisphosphate binding. Lys136 provides a ligand contact to dihydroxyacetone phosphate. Tyr237 (proton donor/acceptor; for FBP aldolase activity) is an active-site residue. 3 residues coordinate Mg(2+): Lys240, Asp241, and Asp242. Catalysis depends on Lys240, which acts as the Schiff-base intermediate with DHAP; for FBP aldolase activity. Beta-D-fructose 1,6-bisphosphate-binding positions include 250-251 (QS), Arg274, Asp295, and Tyr357. Positions 274 and 295 each coordinate dihydroxyacetone phosphate.

It belongs to the FBP aldolase/phosphatase family. As to quaternary structure, homooctamer; dimer of tetramers. The cofactor is Mg(2+).

It carries out the reaction beta-D-fructose 1,6-bisphosphate = D-glyceraldehyde 3-phosphate + dihydroxyacetone phosphate. It catalyses the reaction beta-D-fructose 1,6-bisphosphate + H2O = beta-D-fructose 6-phosphate + phosphate. Its pathway is carbohydrate biosynthesis; gluconeogenesis. Its activity is regulated as follows. FBPase activity is inhibited by Ca(2+), ATP, ADP and phosphoenolpyruvate. Its function is as follows. Catalyzes two subsequent steps in gluconeogenesis: the aldol condensation of dihydroxyacetone phosphate (DHAP) and glyceraldehyde-3-phosphate (GA3P) to fructose-1,6-bisphosphate (FBP), and the dephosphorylation of FBP to fructose-6-phosphate (F6P). Can also dephosphorylate, with lower activity, other related substrates including fructose-1-phosphate, fructose-6-phosphate, glucose-1-phosphate, glucose-6-phosphate, glycerol-2-phosphate, phosphoenolpyruvate, 5'-AMP, 6'-ADP and 7'-ATP. The protein is Fructose-1,6-bisphosphate aldolase/phosphatase of Thermococcus onnurineus (strain NA1).